The following is a 293-amino-acid chain: Pyridoxal 5'-phosphate synthase subunit PdxS (293 aa).

Asp23 lines the D-ribose 5-phosphate pocket. The active-site Schiff-base intermediate with D-ribose 5-phosphate is the Lys80. Gly152 is a binding site for D-ribose 5-phosphate. Arg164 is a binding site for D-glyceraldehyde 3-phosphate. Residues Gly213 and Gly234 to Ser235 each bind D-ribose 5-phosphate.

It belongs to the PdxS/SNZ family. In terms of assembly, in the presence of PdxT, forms a dodecamer of heterodimers.

It carries out the reaction aldehydo-D-ribose 5-phosphate + D-glyceraldehyde 3-phosphate + L-glutamine = pyridoxal 5'-phosphate + L-glutamate + phosphate + 3 H2O + H(+). It functions in the pathway cofactor biosynthesis; pyridoxal 5'-phosphate biosynthesis. Functionally, catalyzes the formation of pyridoxal 5'-phosphate from ribose 5-phosphate (RBP), glyceraldehyde 3-phosphate (G3P) and ammonia. The ammonia is provided by the PdxT subunit. Can also use ribulose 5-phosphate and dihydroxyacetone phosphate as substrates, resulting from enzyme-catalyzed isomerization of RBP and G3P, respectively. This chain is Pyridoxal 5'-phosphate synthase subunit PdxS, found in Roseiflexus castenholzii (strain DSM 13941 / HLO8).